The following is a 735-amino-acid chain: MEIGTEISRKIRSAIKGKLQELGAYVDEELPDYIMVMVANKKSQDQMTEDLSLFLGNNTIRFTVWLHGVLDKLRSVTTDPASLKSSDTNLFDGNVPSNKSSFSRGDERRHEAAVPPLAVSSTRPEKRESRVSTSSQEQKATNVRQTYDDGAATRLMSTVKPLRELAPSEDVIDIKPEPDDLIDEDLNFVQENPLSQKKTTVTLTYGSSRPSIEIYRPPATRNTDSGAHLNRLQFQQQQNSIHAAKQLDIQSSRVYETGRLCEPEVLNSLEETYSPFFRSNAEKMSIEEENFRKRKLPVVSSVVKVKKFSHDGEEEEEDDDCGSRTGSISSSVSVPAKPERRPSLPPSKQANKNLILKAISEAQESVTKTTNYSTVSQKQTLPVAPRTRTSQEDLLAEVAQGHGRVPRISSPVKEEEAQGGSVDERQGTQQRQLLSRLQIDPVMAETLQISQDYYDMESMVHADTRSFILKKPKLCEELVVAASQASGMETADALQARSGHLVQTRDLVQPDKPASPKFIVTLDGVPSPPGYMSDQEEDMCSEGMRPAQHPAASHGGLAGLLHPQRSRVLSRQLEDPDGSFANAEMSELSVAQKPEKLLERCKYWPACKNGDECAYHHPVSPCKAFPNCKFAEKCLFVHPNCKYDAKCTKPDCPFTHMSRRTPGLPPKPVTAPAPPSSSQLCRYFPACKKMECPFYHPKHCRFNTQCTRPDCAFYHPTITVPPRHALKWIRPQTSD.

The residue at position 1 (Met-1) is an N-acetylmethionine. 2 stretches are compositionally biased toward polar residues: residues 79–103 and 131–141; these read DPASLKSSDTNLFDGNVPSNKSSFS and VSTSSQEQKAT. The segment at 79–141 is disordered; the sequence is DPASLKSSDT…STSSQEQKAT (63 aa). A Phosphoserine modification is found at Ser-85. Glycyl lysine isopeptide (Lys-Gly) (interchain with G-Cter in SUMO2) cross-links involve residues Lys-99, Lys-139, Lys-175, and Lys-198. Ser-240 carries the phosphoserine modification. Glycyl lysine isopeptide (Lys-Gly) (interchain with G-Cter in SUMO2) cross-links involve residues Lys-245, Lys-283, and Lys-295. Residues 307 to 351 are disordered; that stretch reads KFSHDGEEEEEDDDCGSRTGSISSSVSVPAKPERRPSLPPSKQAN. A phosphoserine mark is found at Ser-309, Ser-327, and Ser-343. Position 357 is an N6-acetyllysine; alternate (Lys-357). Lys-357 is covalently cross-linked (Glycyl lysine isopeptide (Lys-Gly) (interchain with G-Cter in SUMO2); alternate). A compositionally biased stretch (polar residues) spans 366-380; it reads VTKTTNYSTVSQKQT. The disordered stretch occupies residues 366–388; that stretch reads VTKTTNYSTVSQKQTLPVAPRTR. Lys-378 participates in a covalent cross-link: Glycyl lysine isopeptide (Lys-Gly) (interchain with G-Cter in SUMO2). Ser-390 and Ser-409 each carry phosphoserine. A disordered region spans residues 400-430; the sequence is QGHGRVPRISSPVKEEEAQGGSVDERQGTQQ. The span at 412–426 shows a compositional bias: basic and acidic residues; the sequence is VKEEEAQGGSVDERQ. Lys-413 participates in a covalent cross-link: Glycyl lysine isopeptide (Lys-Gly) (interchain with G-Cter in SUMO2). 5 positions are modified to phosphoserine: Ser-421, Ser-498, Ser-515, Ser-527, and Ser-620. C3H1-type zinc fingers lie at residues 595-620, 621-640, 641-656, 681-698, and 700-718; these read EKLLERCKYWPACKNGDECAYHHPVS, PCKAFPNCKFAEKCLFVHPN, CKYDAKCTKPDCPFTH, CRYFPACKKMECPFYHPK, and CRFNTQCTRPDCAFYHPTI.

Belongs to the ZC3H14 family. As to quaternary structure, homodimer; facilitating circular RNAs (circRNAs) formation. Associates with the spliceosome. Interacts with HOOK2. Interacts with ZFC3H1 in a RNase-sensitive manner.

The protein localises to the nucleus speckle. Its function is as follows. RNA-binding protein involved in the biogenesis of circular RNAs (circRNAs), which are produced by back-splicing circularization of pre-mRNAs. Acts by binding to both exon-intron boundary and 3'-UTR of pre-mRNAs to promote circRNA biogenesis through dimerization and the association with the spliceosome. Required for spermatogenesis via involvement in circRNA biogenesis. Regulates the pre-mRNA processing of ATP5MC1; preventing its degradation. Also binds the poly(A) tail of mRNAs; controlling poly(A) length in neuronal cells. This chain is Zinc finger CCCH domain-containing protein 14 (ZC3H14), found in Bos taurus (Bovine).